Consider the following 135-residue polypeptide: Protein NrdI (135 aa).

Belongs to the NrdI family.

Functionally, probably involved in ribonucleotide reductase function. In Pectobacterium atrosepticum (strain SCRI 1043 / ATCC BAA-672) (Erwinia carotovora subsp. atroseptica), this protein is Protein NrdI.